The primary structure comprises 208 residues: Large ribosomal subunit protein bL25 (208 aa).

This sequence belongs to the bacterial ribosomal protein bL25 family. CTC subfamily. In terms of assembly, part of the 50S ribosomal subunit; part of the 5S rRNA/L5/L18/L25 subcomplex. Contacts the 5S rRNA. Binds to the 5S rRNA independently of L5 and L18.

This is one of the proteins that binds to the 5S RNA in the ribosome where it forms part of the central protuberance. This chain is Large ribosomal subunit protein bL25, found in Bordetella pertussis (strain Tohama I / ATCC BAA-589 / NCTC 13251).